The chain runs to 532 residues: Probable pectinesterase/pectinesterase inhibitor 39 (532 aa).

The first 34 residues, 1-34 (MINNHPIREKPKHIIFNLLSLIFFLIFLSTVVSS), serve as a signal peptide directing secretion. A pectinesterase inhibitor 39 region spans residues 35-169 (QSPSYTTHKT…ENLKEIILDI (135 aa)). N-linked (GlcNAc...) asparagine glycans are attached at residues N62, N74, N85, N172, N221, N231, N244, and N287. The interval 221–518 (NLSVAIDGTG…FTVGPFIDGS (298 aa)) is pectinesterase 39. Substrate-binding residues include T296 and Q326. The active-site Proton donor; for pectinesterase activity is the D349. D370 (nucleophile; for pectinesterase activity) is an active-site residue. 2 N-linked (GlcNAc...) asparagine glycosylation sites follow: N382 and N404. Substrate is bound by residues R438 and W440. N-linked (GlcNAc...) asparagine glycosylation is found at N502 and N522.

In the N-terminal section; belongs to the PMEI family. It in the C-terminal section; belongs to the pectinesterase family. Expressed in siliques but not in flower buds.

Its subcellular location is the secreted. It localises to the cell wall. The catalysed reaction is [(1-&gt;4)-alpha-D-galacturonosyl methyl ester](n) + n H2O = [(1-&gt;4)-alpha-D-galacturonosyl](n) + n methanol + n H(+). It participates in glycan metabolism; pectin degradation; 2-dehydro-3-deoxy-D-gluconate from pectin: step 1/5. In terms of biological role, acts in the modification of cell walls via demethylesterification of cell wall pectin. This chain is Probable pectinesterase/pectinesterase inhibitor 39 (PME39), found in Arabidopsis thaliana (Mouse-ear cress).